Reading from the N-terminus, the 230-residue chain is MVKLVFARHGESEWNKANLFTGWADVDLSEKGTQQAIDAGKLIKEAGIEFDQAYTSVLKRAIKTTNLALEAADQLWVPVEKSWRLNERHYGGLTGKNKAEAAEQFGDEQVHIWRRSYDVLPPAMPHDDEYSAHTDRRYASLDDSVIPDAENLKVTLERALPFWEDKIAPALKDGKNVFVGAHGNSIRALVKHIKHLSDDEIMGVEIPNFPPLVFEFDEKLNVVKEYYLGK.

Substrate-binding positions include 8-15, 21-22, Arg-60, 87-90, Lys-98, 114-115, and 183-184; these read RHGESEWN, TG, ERHY, RR, and GN. The active-site Tele-phosphohistidine intermediate is His-9. The Proton donor/acceptor role is filled by Glu-87.

The protein belongs to the phosphoglycerate mutase family. BPG-dependent PGAM subfamily.

It catalyses the reaction (2R)-2-phosphoglycerate = (2R)-3-phosphoglycerate. It participates in carbohydrate degradation; glycolysis; pyruvate from D-glyceraldehyde 3-phosphate: step 3/5. Its function is as follows. Catalyzes the interconversion of 2-phosphoglycerate and 3-phosphoglycerate. This is 2,3-bisphosphoglycerate-dependent phosphoglycerate mutase from Streptococcus gordonii (strain Challis / ATCC 35105 / BCRC 15272 / CH1 / DL1 / V288).